A 174-amino-acid chain; its full sequence is Crossover junction endodeoxyribonuclease RuvC (174 aa).

Residues Asp-8, Glu-67, and Asp-139 contribute to the active site. Mg(2+) contacts are provided by Asp-8, Glu-67, and Asp-139.

Belongs to the RuvC family. As to quaternary structure, homodimer which binds Holliday junction (HJ) DNA. The HJ becomes 2-fold symmetrical on binding to RuvC with unstacked arms; it has a different conformation from HJ DNA in complex with RuvA. In the full resolvosome a probable DNA-RuvA(4)-RuvB(12)-RuvC(2) complex forms which resolves the HJ. The cofactor is Mg(2+).

It is found in the cytoplasm. It catalyses the reaction Endonucleolytic cleavage at a junction such as a reciprocal single-stranded crossover between two homologous DNA duplexes (Holliday junction).. Functionally, the RuvA-RuvB-RuvC complex processes Holliday junction (HJ) DNA during genetic recombination and DNA repair. Endonuclease that resolves HJ intermediates. Cleaves cruciform DNA by making single-stranded nicks across the HJ at symmetrical positions within the homologous arms, yielding a 5'-phosphate and a 3'-hydroxyl group; requires a central core of homology in the junction. The consensus cleavage sequence is 5'-(A/T)TT(C/G)-3'. Cleavage occurs on the 3'-side of the TT dinucleotide at the point of strand exchange. HJ branch migration catalyzed by RuvA-RuvB allows RuvC to scan DNA until it finds its consensus sequence, where it cleaves and resolves the cruciform DNA. The sequence is that of Crossover junction endodeoxyribonuclease RuvC from Pseudomonas syringae pv. syringae (strain B728a).